We begin with the raw amino-acid sequence, 334 residues long: Proline-serine-threonine phosphatase-interacting protein 2 (334 aa).

In terms of domain architecture, F-BAR spans 4 to 264 (SLFKGNFWSA…SLEMCSIQRD (261 aa)). Positions 66–166 (GQSEINTLKR…AVSRSANLVN (101 aa)) form a coiled coil. A disordered region spans residues 295–322 (VPAGKATGPNLARRGPLPIPKSSPDDPN). A phosphotyrosine mark is found at Tyr-323 and Tyr-329.

In terms of processing, phosphorylated on tyrosine.

The protein localises to the cytoplasm. It localises to the membrane. Functionally, binds to F-actin. May be involved in regulation of the actin cytoskeleton. This Homo sapiens (Human) protein is Proline-serine-threonine phosphatase-interacting protein 2 (PSTPIP2).